Consider the following 117-residue polypeptide: Immunoglobulin heavy variable 3-11 (117 aa).

Residues 1–19 form the signal peptide; that stretch reads MEFGLSWVFLVAIIKGVQC. The residue at position 20 (Gln-20) is a Pyrrolidone carboxylic acid. Positions 20 to 44 are framework-1; sequence QVQLVESGGGLVKPGGSLRLSCAAS. Residues 20–117 form the Ig-like domain; it reads QVQLVESGGG…EDTAVYYCAR (98 aa). A disulfide bridge connects residues Cys-41 and Cys-115. The segment at 45 to 52 is complementarity-determining-1; it reads GFTFSDYY. The framework-2 stretch occupies residues 53–69; it reads MSWIRQAPGKGLEWVSY. Residues 70–77 form a complementarity-determining-2 region; the sequence is ISSSSSYT. The tract at residues 78-115 is framework-3; it reads NYADSVKGRFTISRDNAKNSLYLQMNSLRAEDTAVYYC. Residues 116–117 form a complementarity-determining-3 region; sequence AR.

Immunoglobulins are composed of two identical heavy chains and two identical light chains; disulfide-linked.

Its subcellular location is the secreted. It is found in the cell membrane. In terms of biological role, v region of the variable domain of immunoglobulin heavy chains that participates in the antigen recognition. Immunoglobulins, also known as antibodies, are membrane-bound or secreted glycoproteins produced by B lymphocytes. In the recognition phase of humoral immunity, the membrane-bound immunoglobulins serve as receptors which, upon binding of a specific antigen, trigger the clonal expansion and differentiation of B lymphocytes into immunoglobulins-secreting plasma cells. Secreted immunoglobulins mediate the effector phase of humoral immunity, which results in the elimination of bound antigens. The antigen binding site is formed by the variable domain of one heavy chain, together with that of its associated light chain. Thus, each immunoglobulin has two antigen binding sites with remarkable affinity for a particular antigen. The variable domains are assembled by a process called V-(D)-J rearrangement and can then be subjected to somatic hypermutations which, after exposure to antigen and selection, allow affinity maturation for a particular antigen. The chain is Immunoglobulin heavy variable 3-11 from Homo sapiens (Human).